We begin with the raw amino-acid sequence, 75 residues long: UPF0352 protein VV1166 (75 aa).

The protein belongs to the UPF0352 family.

This chain is UPF0352 protein VV1166, found in Vibrio vulnificus (strain YJ016).